We begin with the raw amino-acid sequence, 170 residues long: Ribosome maturation factor RimM (170 aa).

Residues 98–170 (PDEYYWVDLE…RIVVDWDPEF (73 aa)) form the PRC barrel domain.

It belongs to the RimM family. As to quaternary structure, binds ribosomal protein uS19.

Its subcellular location is the cytoplasm. In terms of biological role, an accessory protein needed during the final step in the assembly of 30S ribosomal subunit, possibly for assembly of the head region. Essential for efficient processing of 16S rRNA. May be needed both before and after RbfA during the maturation of 16S rRNA. It has affinity for free ribosomal 30S subunits but not for 70S ribosomes. The sequence is that of Ribosome maturation factor RimM from Xylella fastidiosa (strain 9a5c).